We begin with the raw amino-acid sequence, 413 residues long: MDTNSKTKVQTENKKIKAKFIHNHGQKPSLIQITPPMISSTLFHAYPLLLIFDNALANIMWLSDDKCLTFIYLTSIWLTISFFIPVETEASHFLPFTKILRLWLGIISGAFLFLSFMYYIVSLIASLRDTEPPTLDEIVVLLESVLDKLEVLRNELNVWKKLKLSFDGVNKECSGKRLFCRLFLFGTIFQIIIMRYISPGTYTRFFIITGLIYNTSSFQATLRLLWRFTAVRNFYYLGIESFKISSFLPKHLKMEQIIPLSQGRAITVPLVEVLPKLLRDKKGDDHIHILQLLLNEQKDNFGNEDLKILEIEVYENQRRWYQNKNWSTKLLPYERQNYCIEIKNTDGTLTMRSCLPPDGLGEEELPNNWHWINDNWDGTDWIYSDSAWKEIGQYSSLESFTRSRKWKRRLFHL.

Topologically, residues 1 to 66 (MDTNSKTKVQ…ANIMWLSDDK (66 aa)) are peroxisomal. The chain crosses the membrane as a helical span at residues 67–87 (CLTFIYLTSIWLTISFFIPVE). Over 88–103 (TEASHFLPFTKILRLW) the chain is Cytoplasmic. The chain crosses the membrane as a helical span at residues 104–124 (LGIISGAFLFLSFMYYIVSLI). Over 125–181 (ASLRDTEPPTLDEIVVLLESVLDKLEVLRNELNVWKKLKLSFDGVNKECSGKRLFCR) the chain is Peroxisomal. The helical transmembrane segment at 182-202 (LFLFGTIFQIIIMRYISPGTY) threads the bilayer. At 203-413 (TRFFIITGLI…RKWKRRLFHL (211 aa)) the chain is on the cytoplasmic side.

The protein belongs to the PEX28-32 family. PEX32 subfamily.

It localises to the peroxisome membrane. The protein is Peroxisomal membrane protein PEX32 (PEX32) of Saccharomyces cerevisiae (strain ATCC 204508 / S288c) (Baker's yeast).